The primary structure comprises 457 residues: Chromosomal replication initiator protein DnaA (457 aa).

The tract at residues 1–90 is domain I, interacts with DnaA modulators; that stretch reads MAVSLWQQCI…RPSAKPQAPA (90 aa). A disordered region spans residues 79–120; the sequence is GSRPSAKPQAPAPAAVKAAAPQPKPGNSFVSQPEPAVSNHRS. A compositionally biased stretch (low complexity) spans 84-99; the sequence is AKPQAPAPAAVKAAAP. A domain II region spans residues 91–120; it reads PAAVKAAAPQPKPGNSFVSQPEPAVSNHRS. The tract at residues 121–337 is domain III, AAA+ region; the sequence is NINPTYQFDN…GALNRVIANA (217 aa). ATP-binding residues include Gly-165, Gly-167, Lys-168, and Thr-169. Positions 338-457 are domain IV, binds dsDNA; sequence NFTGRPITID…YANLIRTLSS (120 aa).

It belongs to the DnaA family. Oligomerizes as a right-handed, spiral filament on DNA at oriC.

The protein localises to the cytoplasm. Plays an essential role in the initiation and regulation of chromosomal replication. ATP-DnaA binds to the origin of replication (oriC) to initiate formation of the DNA replication initiation complex once per cell cycle. Binds the DnaA box (a 9 base pair repeat at the origin) and separates the double-stranded (ds)DNA. Forms a right-handed helical filament on oriC DNA; dsDNA binds to the exterior of the filament while single-stranded (ss)DNA is stabiized in the filament's interior. The ATP-DnaA-oriC complex binds and stabilizes one strand of the AT-rich DNA unwinding element (DUE), permitting loading of DNA polymerase. After initiation quickly degrades to an ADP-DnaA complex that is not apt for DNA replication. Binds acidic phospholipids. The chain is Chromosomal replication initiator protein DnaA from Shewanella amazonensis (strain ATCC BAA-1098 / SB2B).